The following is a 242-amino-acid chain: tRNA pseudouridine synthase A (242 aa).

The active-site Nucleophile is the Asp51. Tyr107 lines the substrate pocket.

It belongs to the tRNA pseudouridine synthase TruA family. In terms of assembly, homodimer.

It carries out the reaction uridine(38/39/40) in tRNA = pseudouridine(38/39/40) in tRNA. Its function is as follows. Formation of pseudouridine at positions 38, 39 and 40 in the anticodon stem and loop of transfer RNAs. The sequence is that of tRNA pseudouridine synthase A from Helicobacter pylori (strain ATCC 700392 / 26695) (Campylobacter pylori).